The sequence spans 270 residues: Cyclic pyranopterin monophosphate synthase, mitochondrial (270 aa).

Residues 1 to 32 (MISTLRRAVFLRRFPAVVSPIKRAFSSRIDDE) constitute a mitochondrion transit peptide. Residues 187–189 (LCH) and 225–226 (ME) contribute to the substrate site. The active site involves D240.

The protein belongs to the MoaC family. Homohexamer. Abundantly expressed in the roots.

The protein localises to the mitochondrion matrix. It catalyses the reaction (8S)-3',8-cyclo-7,8-dihydroguanosine 5'-triphosphate = cyclic pyranopterin phosphate + diphosphate. It functions in the pathway cofactor biosynthesis; molybdopterin biosynthesis. Its function is as follows. Catalyzes the conversion of (8S)-3',8-cyclo-7,8-dihydroguanosine 5'-triphosphate to cyclic pyranopterin monophosphate (cPMP). The protein is Cyclic pyranopterin monophosphate synthase, mitochondrial (CNX3) of Arabidopsis thaliana (Mouse-ear cress).